We begin with the raw amino-acid sequence, 54 residues long: Large ribosomal subunit protein bL32 (54 aa).

The disordered stretch occupies residues 1-54; that stretch reads MAVQQNRKTRSRRGMRRSHDALTAAQLSVDSTSGETHRRHHVTADGYYRGKKVI. Residues 7–16 show a composition bias toward basic residues; that stretch reads RKTRSRRGMR. The span at 25–34 shows a compositional bias: polar residues; it reads AQLSVDSTSG.

This sequence belongs to the bacterial ribosomal protein bL32 family.

This chain is Large ribosomal subunit protein bL32, found in Tolumonas auensis (strain DSM 9187 / NBRC 110442 / TA 4).